Consider the following 424-residue polypeptide: Phosphoprotein associated with glycosphingolipid-enriched microdomains 1 (424 aa).

Over 1–17 (MGPAGSALSSGQMQMQM) the chain is Extracellular. A helical; Signal-anchor for type III membrane protein transmembrane segment spans residues 18–38 (VLWGSLAAVAMFFLITFLILL). 2 S-palmitoyl cysteine lipidation sites follow: Cys-39 and Cys-42. Residues 39–424 (CSSCDRDKKP…LQQGRDVTRL (386 aa)) lie on the Cytoplasmic side of the membrane. Ser-52 and Ser-63 each carry phosphoserine. Phosphotyrosine; by LYN is present on Tyr-107. A Phosphoserine modification is found at Ser-157. Phosphotyrosine occurs at positions 165, 183, and 224. Positions 194–347 (DKSQGGKSKS…GPPQRSSSSC (154 aa)) are disordered. A compositionally biased stretch (basic and acidic residues) spans 215-230 (AEGKADFAEYASVDRN). Ser-226 bears the Phosphoserine mark. The span at 236–247 (STNAESILGTSS) shows a compositional bias: polar residues. At Tyr-314 the chain carries Phosphotyrosine; by FYN and LYN. The interaction with CSK stretch occupies residues 314-317 (YSSV). Residues 331 to 347 (STCQCPQGPPQRSSSSC) are compositionally biased toward polar residues. Ser-346 carries the post-translational modification Phosphoserine. Phosphotyrosine is present on residues Tyr-351, Tyr-381, and Tyr-409. The segment at 361–424 (PNSISMLPPA…LQQGRDVTRL (64 aa)) is disordered. An interaction with NHERF1 region spans residues 422–424 (TRL).

In terms of assembly, interacts with NHERF1/EBP50. In resting T-cells, part of a PAG1-NHERF1-MSN complex which is disrupted upon TCR activation. When phosphorylated, interacts with CSK. Identified in a complex with LYN and STAT3. Interacts with LYN. In terms of processing, palmitoylated. Post-translationally, phosphorylated by FYN on Tyr-314 in resting T-cells; which promotes interaction with CSK. Dephosphorylated by PTPRC/CD45 upon TCR activation; which leads to CSK dissociation. May also be dephosphorylated by PTPN11. Hyperphosphorylated in mast cells upon FCER1 activation. Phosphorylated by LYN in response to EPO. Ubiquitously expressed, with highest levels in developing brain, lung, thymus, spleen and testis. Present in mast cells.

The protein resides in the cell membrane. Negatively regulates TCR (T-cell antigen receptor)-mediated signaling in T-cells and FCER1 (high affinity immunoglobulin epsilon receptor)-mediated signaling in mast cells. Promotes CSK activation and recruitment to lipid rafts, which results in LCK inhibition. Inhibits immunological synapse formation by preventing dynamic arrangement of lipid raft proteins. May be involved in cell adhesion signaling. This Rattus norvegicus (Rat) protein is Phosphoprotein associated with glycosphingolipid-enriched microdomains 1 (Pag1).